Reading from the N-terminus, the 485-residue chain is Cytoplasmic tRNA 2-thiolation protein 2 (485 aa).

The protein belongs to the CTU2/NCS2 family.

The protein resides in the cytoplasm. The protein operates within tRNA modification; 5-methoxycarbonylmethyl-2-thiouridine-tRNA biosynthesis. Functionally, plays a central role in 2-thiolation of mcm(5)S(2)U at tRNA wobble positions of tRNA(Lys), tRNA(Glu) and tRNA(Gln). May act by forming a heterodimer with NCS6 that ligates sulfur from thiocarboxylated URM1 onto the uridine of tRNAs at wobble position. Prior mcm(5) tRNA modification by the elongator complex is required for 2-thiolation. May also be involved in protein urmylation. This chain is Cytoplasmic tRNA 2-thiolation protein 2, found in Vanderwaltozyma polyspora (strain ATCC 22028 / DSM 70294 / BCRC 21397 / CBS 2163 / NBRC 10782 / NRRL Y-8283 / UCD 57-17) (Kluyveromyces polysporus).